A 122-amino-acid chain; its full sequence is MARVKRAVNAQKKRRTILESAKGYRGQRSRLYRKAKEQMLHSMTYSYRDRRARKGDFRKLWITRINAATRQNGMSYNRFVQGLKAAGVEVDRKILAELAVNDSQAFAALVDVARQNLPEGAA.

This sequence belongs to the bacterial ribosomal protein bL20 family.

Its function is as follows. Binds directly to 23S ribosomal RNA and is necessary for the in vitro assembly process of the 50S ribosomal subunit. It is not involved in the protein synthesizing functions of that subunit. This Saccharopolyspora erythraea (strain ATCC 11635 / DSM 40517 / JCM 4748 / NBRC 13426 / NCIMB 8594 / NRRL 2338) protein is Large ribosomal subunit protein bL20.